The following is a 214-amino-acid chain: Large ribosomal subunit protein bL25 (214 aa).

It belongs to the bacterial ribosomal protein bL25 family. CTC subfamily. Part of the 50S ribosomal subunit; part of the 5S rRNA/L5/L18/L25 subcomplex. Contacts the 5S rRNA. Binds to the 5S rRNA independently of L5 and L18.

This is one of the proteins that binds to the 5S RNA in the ribosome where it forms part of the central protuberance. This is Large ribosomal subunit protein bL25 from Polynucleobacter necessarius subsp. necessarius (strain STIR1).